A 71-amino-acid chain; its full sequence is UPF0346 protein BCE_2336 (71 aa).

Belongs to the UPF0346 family.

This is UPF0346 protein BCE_2336 from Bacillus cereus (strain ATCC 10987 / NRS 248).